A 243-amino-acid polypeptide reads, in one-letter code: Ubiquinone/menaquinone biosynthesis C-methyltransferase UbiE (243 aa).

Residues Thr-69, Asp-90, and 116–117 (DA) each bind S-adenosyl-L-methionine.

This sequence belongs to the class I-like SAM-binding methyltransferase superfamily. MenG/UbiE family.

The catalysed reaction is a 2-demethylmenaquinol + S-adenosyl-L-methionine = a menaquinol + S-adenosyl-L-homocysteine + H(+). The enzyme catalyses a 2-methoxy-6-(all-trans-polyprenyl)benzene-1,4-diol + S-adenosyl-L-methionine = a 5-methoxy-2-methyl-3-(all-trans-polyprenyl)benzene-1,4-diol + S-adenosyl-L-homocysteine + H(+). Its pathway is quinol/quinone metabolism; menaquinone biosynthesis; menaquinol from 1,4-dihydroxy-2-naphthoate: step 2/2. It functions in the pathway cofactor biosynthesis; ubiquinone biosynthesis. In terms of biological role, methyltransferase required for the conversion of demethylmenaquinol (DMKH2) to menaquinol (MKH2) and the conversion of 2-polyprenyl-6-methoxy-1,4-benzoquinol (DDMQH2) to 2-polyprenyl-3-methyl-6-methoxy-1,4-benzoquinol (DMQH2). In Burkholderia vietnamiensis (strain G4 / LMG 22486) (Burkholderia cepacia (strain R1808)), this protein is Ubiquinone/menaquinone biosynthesis C-methyltransferase UbiE.